A 137-amino-acid polypeptide reads, in one-letter code: Small ribosomal subunit protein eS17 (137 aa).

The protein belongs to the eukaryotic ribosomal protein eS17 family. Component of the small ribosomal subunit. Mature ribosomes consist of a small (40S) and a large (60S) subunit. The 40S subunit contains about 32 different proteins and 1 molecule of RNA (18S). The 60S subunit contains 45 different proteins and 3 molecules of RNA (25S, 5.8S and 5S).

It localises to the cytoplasm. Functionally, component of the ribosome, a large ribonucleoprotein complex responsible for the synthesis of proteins in the cell. The small ribosomal subunit (SSU) binds messenger RNAs (mRNAs) and translates the encoded message by selecting cognate aminoacyl-transfer RNA (tRNA) molecules. The large subunit (LSU) contains the ribosomal catalytic site termed the peptidyl transferase center (PTC), which catalyzes the formation of peptide bonds, thereby polymerizing the amino acids delivered by tRNAs into a polypeptide chain. The nascent polypeptides leave the ribosome through a tunnel in the LSU and interact with protein factors that function in enzymatic processing, targeting, and the membrane insertion of nascent chains at the exit of the ribosomal tunnel. The chain is Small ribosomal subunit protein eS17 (RPS17B) from Candida albicans (strain SC5314 / ATCC MYA-2876) (Yeast).